The following is a 514-amino-acid chain: MAEFQSALELNRFQQHDFLYPLIFQEYIYALAHDHGLNRSILLKNAGYDKKFSLLIVKRLITRMYDQNYLIHSTNDCKQKPFWGRNNHFDSQMISEAFSVIMEIPFSLRLLSWLEKFEKTGTGRVKSDNLRSINLRSIHSIFSFLEDKISHLYYVLDILIPYPIHLEILVQALRYWLKDASSLHFVRFFLHEFHNWNSLITSKKVGPSFSEINQRFFFFLYNSHVCEYESIFVFLRNQSSYLRSTSYRALVERIYFYGKIEHLGEVLSRAFQANLSIFTDSFMHYVRYQGKLILASKGTSLVMNKWNYYFVNFWQSYFYLWSQPRRIHINQLSNHSLDFLAYFSSVRRRTSTVRNQMLSKLFLSDNAINKFDTFVPIIPMIGSLAKSKFCNRAGHPISKAVWLDLSDSDIIDRFGRIARNLSHYHSGSSNKKSLSRIKYILQLSCARTLARXHKSTVRAFLKIFGSELLEEFFTSEEQVLSLTFPRASSISRRLYSERVWYLDISCINELANHD.

The protein belongs to the intron maturase 2 family. MatK subfamily.

Its subcellular location is the plastid. It localises to the chloroplast. Its function is as follows. Usually encoded in the trnK tRNA gene intron. Probably assists in splicing its own and other chloroplast group II introns. The protein is Maturase K (matK) of Trachelium caeruleum (Blue throatwort).